The following is a 124-amino-acid chain: Small ribosomal subunit protein uS12 (124 aa).

It belongs to the universal ribosomal protein uS12 family. As to quaternary structure, part of the 30S ribosomal subunit. Contacts proteins S8 and S17. May interact with IF1 in the 30S initiation complex.

With S4 and S5 plays an important role in translational accuracy. Functionally, interacts with and stabilizes bases of the 16S rRNA that are involved in tRNA selection in the A site and with the mRNA backbone. Located at the interface of the 30S and 50S subunits, it traverses the body of the 30S subunit contacting proteins on the other side and probably holding the rRNA structure together. The combined cluster of proteins S8, S12 and S17 appears to hold together the shoulder and platform of the 30S subunit. This Photorhabdus laumondii subsp. laumondii (strain DSM 15139 / CIP 105565 / TT01) (Photorhabdus luminescens subsp. laumondii) protein is Small ribosomal subunit protein uS12.